The primary structure comprises 197 residues: UPF0314 protein R03235 (197 aa).

A run of 2 helical transmembrane segments spans residues 16–36 (ALWL…QHLM) and 152–172 (LPVA…GYMV).

It belongs to the UPF0314 family.

It localises to the cell membrane. This Rhizobium meliloti (strain 1021) (Ensifer meliloti) protein is UPF0314 protein R03235.